A 161-amino-acid polypeptide reads, in one-letter code: Phosphopantetheine adenylyltransferase (161 aa).

Threonine 10 lines the substrate pocket. Residues 10 to 11 (TF) and histidine 18 contribute to the ATP site. Substrate-binding residues include lysine 42, methionine 74, and arginine 88. ATP is bound by residues 89–91 (GVR), glutamate 99, and 124–130 (LSFVSSS).

The protein belongs to the bacterial CoaD family. As to quaternary structure, homohexamer. The cofactor is Mg(2+).

It localises to the cytoplasm. It catalyses the reaction (R)-4'-phosphopantetheine + ATP + H(+) = 3'-dephospho-CoA + diphosphate. It participates in cofactor biosynthesis; coenzyme A biosynthesis; CoA from (R)-pantothenate: step 4/5. Functionally, reversibly transfers an adenylyl group from ATP to 4'-phosphopantetheine, yielding dephospho-CoA (dPCoA) and pyrophosphate. In Proteus mirabilis (strain HI4320), this protein is Phosphopantetheine adenylyltransferase.